Consider the following 404-residue polypeptide: Acetate kinase (404 aa).

Position 8 (N8) interacts with Mg(2+). K15 is an ATP binding site. R92 lines the substrate pocket. D149 acts as the Proton donor/acceptor in catalysis. ATP contacts are provided by residues 207-211 (HLGSG), 282-284 (DMR), and 327-331 (GIGEN). E378 serves as a coordination point for Mg(2+).

It belongs to the acetokinase family. In terms of assembly, homodimer. It depends on Mg(2+) as a cofactor. Mn(2+) serves as cofactor.

Its subcellular location is the cytoplasm. The enzyme catalyses acetate + ATP = acetyl phosphate + ADP. The protein operates within metabolic intermediate biosynthesis; acetyl-CoA biosynthesis; acetyl-CoA from acetate: step 1/2. In terms of biological role, catalyzes the formation of acetyl phosphate from acetate and ATP. Can also catalyze the reverse reaction. The protein is Acetate kinase of Nitrobacter hamburgensis (strain DSM 10229 / NCIMB 13809 / X14).